The sequence spans 568 residues: Oxygen-dependent choline dehydrogenase (568 aa).

Residue 8–37 coordinates FAD; that stretch reads DYVIIGGGSAGSVLGNRLTEDKDKEVLVLE. His-473 serves as the catalytic Proton acceptor.

Belongs to the GMC oxidoreductase family. FAD serves as cofactor.

It carries out the reaction choline + A = betaine aldehyde + AH2. It catalyses the reaction betaine aldehyde + NAD(+) + H2O = glycine betaine + NADH + 2 H(+). It participates in amine and polyamine biosynthesis; betaine biosynthesis via choline pathway; betaine aldehyde from choline (cytochrome c reductase route): step 1/1. In terms of biological role, involved in the biosynthesis of the osmoprotectant glycine betaine. Catalyzes the oxidation of choline to betaine aldehyde and betaine aldehyde to glycine betaine at the same rate. The polypeptide is Oxygen-dependent choline dehydrogenase (Staphylococcus haemolyticus (strain JCSC1435)).